The following is a 384-amino-acid chain: Glucans biosynthesis protein C (384 aa).

Helical transmembrane passes span 17 to 37 (AWLMLLGIPFHISLIYSTHSW), 54 to 74 (FIHAFRMQVFFVISGYFSYML), 91 to 111 (VGIPMLTAIPLLTLPQFILLQ), 140 to 160 (LWFLLVLVILTTVSIGIFTWF), 173 to 193 (AISLAKLSLIFFLLGIAYAAI), 212 to 232 (FIVMQTLFYVPFFILGALAFI), 240 to 260 (FTTPSRGCTLGAAVAFIAYLL), 274 to 294 (TESVITMVMGLWMVNVVFSLG), 311 to 331 (ASLFIYLVHHPLTLFFGAYIT), and 338 to 358 (LIGFLCGLIFVMGIALILYEI).

The protein belongs to the acyltransferase 3 family. OpgC subfamily.

It is found in the cell membrane. The protein operates within glycan metabolism; osmoregulated periplasmic glucan (OPG) biosynthesis. Functionally, necessary for the succinyl substitution of periplasmic glucans. Could catalyze the transfer of succinyl residues from the cytoplasmic side of the membrane to the nascent glucan backbones on the periplasmic side of the membrane. In Salmonella schwarzengrund (strain CVM19633), this protein is Glucans biosynthesis protein C.